Consider the following 138-residue polypeptide: Phosphoribosyl-AMP cyclohydrolase (138 aa).

Asp-84 contributes to the Mg(2+) binding site. Cys-85 serves as a coordination point for Zn(2+). Asp-86 and Asp-88 together coordinate Mg(2+). Cys-102 and Cys-109 together coordinate Zn(2+).

Belongs to the PRA-CH family. As to quaternary structure, homodimer. Requires Mg(2+) as cofactor. It depends on Zn(2+) as a cofactor.

The protein resides in the cytoplasm. The enzyme catalyses 1-(5-phospho-beta-D-ribosyl)-5'-AMP + H2O = 1-(5-phospho-beta-D-ribosyl)-5-[(5-phospho-beta-D-ribosylamino)methylideneamino]imidazole-4-carboxamide. The protein operates within amino-acid biosynthesis; L-histidine biosynthesis; L-histidine from 5-phospho-alpha-D-ribose 1-diphosphate: step 3/9. Catalyzes the hydrolysis of the adenine ring of phosphoribosyl-AMP. This chain is Phosphoribosyl-AMP cyclohydrolase, found in Burkholderia cenocepacia (strain ATCC BAA-245 / DSM 16553 / LMG 16656 / NCTC 13227 / J2315 / CF5610) (Burkholderia cepacia (strain J2315)).